A 340-amino-acid polypeptide reads, in one-letter code: Ferrochelatase (340 aa).

The Fe cation site is built by His189 and Glu292.

The protein belongs to the ferrochelatase family.

It localises to the cytoplasm. The enzyme catalyses heme b + 2 H(+) = protoporphyrin IX + Fe(2+). It functions in the pathway porphyrin-containing compound metabolism; protoheme biosynthesis; protoheme from protoporphyrin-IX: step 1/1. Catalyzes the ferrous insertion into protoporphyrin IX. This chain is Ferrochelatase, found in Pseudomonas savastanoi pv. phaseolicola (strain 1448A / Race 6) (Pseudomonas syringae pv. phaseolicola (strain 1448A / Race 6)).